We begin with the raw amino-acid sequence, 611 residues long: Growth hormone receptor (611 aa).

The N-terminal stretch at 1 to 20 (MDLRHLLLTLVLVCANDSLS) is a signal peptide. The N-linked (GlcNAc...) asparagine glycan is linked to asparagine 16. Residues 21-240 (ASDDVLRLPQ…EFVHCAEEIE (220 aa)) lie on the Extracellular side of the membrane. A disulfide bridge connects residues cysteine 34 and cysteine 44. Asparagine 53 carries an N-linked (GlcNAc...) asparagine glycan. Cysteine 75 and cysteine 86 are disulfide-bonded. Asparagine 89 carries an N-linked (GlcNAc...) asparagine glycan. Cysteine 100 and cysteine 114 are oxidised to a cystine. The region spanning 125–228 (PPVHLNWTLL…EILYVSFSQA (104 aa)) is the Fibronectin type-III domain. N-linked (GlcNAc...) asparagine glycans are attached at residues asparagine 130, asparagine 135, and asparagine 174. A WSXWS motif motif is present at residues 214–218 (FGEFS). Residues 241–264 (FPWFLVVIFGACGLAVTVILILLS) traverse the membrane as a helical segment. Topologically, residues 265–611 (KQSRLKMLIF…STDQLNKIMP (347 aa)) are cytoplasmic. A required for JAK2 binding region spans residues 270 to 355 (KMLIFPPVPV…HLKSHSCLGA (86 aa)). Positions 273–281 (IFPPVPVPK) match the Box 1 motif motif. The UbE motif signature appears at 316 to 325 (DLWVEFIELD). Positions 411–455 (SLPSLANTDTQQPRMSTRPENSQPWPPFADSIDAASPSAHNQLSN) are disordered. The segment covering 414 to 433 (SLANTDTQQPRMSTRPENSQ) has biased composition (polar residues).

Belongs to the type I cytokine receptor family. Type 1 subfamily. In terms of processing, the soluble form (GHBP) is produced by phorbol ester-promoted proteolytic cleavage at the cell surface (shedding) by ADAM17/TACE.

The protein resides in the cell membrane. It localises to the secreted. In terms of biological role, receptor for pituitary gland growth hormone (GH1) involved in regulating postnatal body growth. On ligand binding, couples to the JAK2/STAT5 pathway. Its function is as follows. The soluble form (GHBP) acts as a reservoir of growth hormone in plasma and may be a modulator/inhibitor of GH signaling. The chain is Growth hormone receptor (GHR) from Columba livia (Rock dove).